A 499-amino-acid chain; its full sequence is Lysine--tRNA ligase (499 aa).

Mg(2+) is bound by residues Glu-408 and Glu-415.

The protein belongs to the class-II aminoacyl-tRNA synthetase family. Homodimer. It depends on Mg(2+) as a cofactor.

The protein resides in the cytoplasm. The enzyme catalyses tRNA(Lys) + L-lysine + ATP = L-lysyl-tRNA(Lys) + AMP + diphosphate. This chain is Lysine--tRNA ligase, found in Thermoanaerobacter sp. (strain X514).